Consider the following 174-residue polypeptide: Shikimate kinase 2 (174 aa).

An ATP-binding site is contributed by 12–17 (GAGKTT). Thr-16 and Asp-32 together coordinate Mg(2+). Substrate-binding residues include Asp-34, Arg-58, and Gly-79. The segment at 112-126 (EEYPQDTQRPTLTGR) is LID domain. Residue Arg-120 participates in ATP binding. Arg-139 serves as a coordination point for substrate.

The protein belongs to the shikimate kinase family. AroL subfamily. As to quaternary structure, monomer. Mg(2+) serves as cofactor.

Its subcellular location is the cytoplasm. The enzyme catalyses shikimate + ATP = 3-phosphoshikimate + ADP + H(+). Its pathway is metabolic intermediate biosynthesis; chorismate biosynthesis; chorismate from D-erythrose 4-phosphate and phosphoenolpyruvate: step 5/7. Functionally, catalyzes the specific phosphorylation of the 3-hydroxyl group of shikimic acid using ATP as a cosubstrate. The polypeptide is Shikimate kinase 2 (Serratia proteamaculans (strain 568)).